A 24-amino-acid chain; its full sequence is Defensin D5 (24 aa).

Belongs to the DEFL family. Group IV subfamily. Distributed in the epidermal cell layer of leaves and in the subepidermal layer region of stems. Not in roots.

The protein resides in the secreted. It is found in the cell wall. Functionally, antimicrobial peptide. Active against Fusarium spp., Gram-positive and Gram-negative bacterial pathogens. This chain is Defensin D5, found in Spinacia oleracea (Spinach).